The chain runs to 568 residues: Protein yellow (568 aa).

The first 28 residues, 1–28 (MHAQDKGGILPALSLLLIAVAMVSPSQA), serve as a signal peptide directing secretion. 2 N-linked (GlcNAc...) asparagine glycosylation sites follow: asparagine 151 and asparagine 222.

Belongs to the major royal jelly protein family.

It is found in the secreted. Functionally, controls the pigmentation pattern of the adult cuticle and larval mouth parts. The polypeptide is Protein yellow (y) (Drosophila subobscura (Fruit fly)).